The following is a 124-amino-acid chain: MNAVAQAATPDVNEVPAPLVFTDSAADKVKQLIEEEGNPELKLRVFVQGGGCSGFQYGFTFDEDTNEDDTTMTKNGVTLLIDSMSYQYLVGAEIDYKEDINGAQFVIKNPNASTTCGCGSSFSV.

The iron-sulfur cluster site is built by C52, C116, and C118.

Belongs to the HesB/IscA family. Homodimer. Iron-sulfur cluster serves as cofactor.

Functionally, required for insertion of 4Fe-4S clusters. This is Putative iron-sulfur cluster insertion protein ErpA from Ralstonia nicotianae (strain ATCC BAA-1114 / GMI1000) (Ralstonia solanacearum).